The sequence spans 303 residues: tRNA pseudouridine synthase-like 1 (303 aa).

Catalysis depends on D66, which acts as the Nucleophile. S84 carries the phosphoserine modification. Residue Y130 participates in substrate binding.

This sequence belongs to the tRNA pseudouridine synthase TruA family.

The catalysed reaction is a uridine in tRNA = a pseudouridine in tRNA. The chain is tRNA pseudouridine synthase-like 1 (PUSL1) from Homo sapiens (Human).